Consider the following 296-residue polypeptide: Antisense-enhancing sequence 1 (296 aa).

The active site involves glutamate 47.

This sequence belongs to the PhzF family.

May have isomerase activity. Enhances target gene silencing when coexpressed with antisense RNA. In Schizosaccharomyces pombe (strain 972 / ATCC 24843) (Fission yeast), this protein is Antisense-enhancing sequence 1 (aes1).